The primary structure comprises 694 residues: Glycine--tRNA ligase beta subunit (694 aa).

The protein belongs to the class-II aminoacyl-tRNA synthetase family. In terms of assembly, tetramer of two alpha and two beta subunits.

The protein resides in the cytoplasm. The enzyme catalyses tRNA(Gly) + glycine + ATP = glycyl-tRNA(Gly) + AMP + diphosphate. In Lactiplantibacillus plantarum (strain ATCC BAA-793 / NCIMB 8826 / WCFS1) (Lactobacillus plantarum), this protein is Glycine--tRNA ligase beta subunit.